The primary structure comprises 119 residues: Parathyroid hormone (119 aa).

The signal sequence occupies residues 1–25 (MTSTKNLAKAIVILYAICFFTNSDG). Residues 26–31 (RPMMKR) constitute a propeptide that is removed on maturation.

It belongs to the parathyroid hormone family. In terms of assembly, interacts with PTH1R (via N-terminal extracellular domain).

The protein localises to the secreted. Parathyroid hormone elevates calcium level by dissolving the salts in bone and preventing their renal excretion. Acts by binding to its receptor, PTH1R, activating G protein-coupled receptor signaling. Stimulates [1-14C]-2-deoxy-D-glucose (2DG) transport and glycogen synthesis in osteoblastic cells. The polypeptide is Parathyroid hormone (Gallus gallus (Chicken)).